We begin with the raw amino-acid sequence, 195 residues long: MRRAKITRETAETQIEVELDLDGTGRYDNRTGVGFFDHMLDQLARHSLIDLTVRAKGDLHIDDHHTVEDTGIAIGQALTQALGDKRGIRRYGSFHLAMDDALVRAALDLSARPYLVWNVDFPAQKIGTFDTELVREFFQALSTHGGITLHVDRIHGLNAHHIAEAAFKAVARAMREAVEPDPRMAGVLPSTKGAL.

The protein belongs to the imidazoleglycerol-phosphate dehydratase family.

It localises to the cytoplasm. It catalyses the reaction D-erythro-1-(imidazol-4-yl)glycerol 3-phosphate = 3-(imidazol-4-yl)-2-oxopropyl phosphate + H2O. Its pathway is amino-acid biosynthesis; L-histidine biosynthesis; L-histidine from 5-phospho-alpha-D-ribose 1-diphosphate: step 6/9. The chain is Imidazoleglycerol-phosphate dehydratase from Paracoccus denitrificans (strain Pd 1222).